A 220-amino-acid polypeptide reads, in one-letter code: 2-dehydro-3-deoxy-phosphogluconate aldolase (220 aa).

Glutamate 48 (proton acceptor) is an active-site residue. Pyruvate contacts are provided by arginine 52, threonine 76, and lysine 136. The Schiff-base intermediate with substrate role is filled by lysine 136.

It belongs to the KHG/KDPG aldolase family. As to quaternary structure, homotrimer.

The catalysed reaction is 2-dehydro-3-deoxy-6-phospho-D-gluconate = D-glyceraldehyde 3-phosphate + pyruvate. It participates in carbohydrate acid metabolism; 2-dehydro-3-deoxy-D-gluconate degradation; D-glyceraldehyde 3-phosphate and pyruvate from 2-dehydro-3-deoxy-D-gluconate: step 2/2. Its function is as follows. Involved in the degradation of glucose via the Entner-Doudoroff pathway. Catalyzes the reversible, stereospecific retro-aldol cleavage of 2-keto-3-deoxy-6-phosphogluconate (KDPG) to pyruvate and D-glyceraldehyde-3-phosphate. The protein is 2-dehydro-3-deoxy-phosphogluconate aldolase (eda) of Pseudomonas aeruginosa (strain ATCC 15692 / DSM 22644 / CIP 104116 / JCM 14847 / LMG 12228 / 1C / PRS 101 / PAO1).